A 386-amino-acid polypeptide reads, in one-letter code: L-lactate oxidase (386 aa).

The FMN hydroxy acid dehydrogenase domain occupies 16–382 (AQAPFPICFA…RTITLVKNDG (367 aa)). Y42 serves as a coordination point for pyruvate. FMN is bound by residues 95-97 (PVG), S124, and Q146. Y148 contributes to the pyruvate binding site. T174 provides a ligand contact to FMN. Pyruvate is bound at residue R183. Positions 253 and 275 each coordinate FMN. 2 residues coordinate pyruvate: H277 and R280. H277 (proton acceptor) is an active-site residue. FMN contacts are provided by residues 308–312 (DSGVY) and R332.

It belongs to the FMN-dependent alpha-hydroxy acid dehydrogenase family. Homotetramer. FMN serves as cofactor.

It carries out the reaction a (2S)-2-hydroxycarboxylate + O2 = a 2-oxocarboxylate + H2O2. The enzyme catalyses (S)-lactate + O2 = pyruvate + H2O2. The catalysed reaction is 2-hydroxyoctanoate + O2 = 2-oxooctanoate + H2O2. It catalyses the reaction mandelate + O2 = phenylglyoxylate + H2O2. It carries out the reaction 2-hydroxyoctadecanoate + O2 = 2-oxooctadecanoate + H2O2. The enzyme catalyses (S)-2-hydroxyglutarate + O2 = H2O2 + 2-oxoglutarate. Functionally, oxidase that catalyzes the oxidation of a broad range of 2-hydroxyacids in vitro, such as (S)-lactate, 2-hydroxyoctanoate, mandelate, 2-hydroxyoctadecanoate and (S)-2-hydroxyglutarate, to the corresponding 2-oxoacids, with a reduction of O2 to H2O2. May be involved in the utilization of L-lactate as an energy source for growth. This Lysinibacillus sphaericus (strain C3-41) protein is L-lactate oxidase.